A 233-amino-acid chain; its full sequence is Small ribosomal subunit protein uS3 (233 aa).

The region spanning 39–107 is the KH type-2 domain; sequence VRQFLTKELS…PAQINIAEVR (69 aa).

This sequence belongs to the universal ribosomal protein uS3 family. As to quaternary structure, part of the 30S ribosomal subunit. Forms a tight complex with proteins S10 and S14.

Binds the lower part of the 30S subunit head. Binds mRNA in the 70S ribosome, positioning it for translation. The sequence is that of Small ribosomal subunit protein uS3 from Vibrio vulnificus (strain CMCP6).